Here is a 235-residue protein sequence, read N- to C-terminus: 2,3,4,5-tetrahydropyridine-2,6-dicarboxylate N-acetyltransferase (235 aa).

Belongs to the transferase hexapeptide repeat family. DapH subfamily.

It carries out the reaction (S)-2,3,4,5-tetrahydrodipicolinate + acetyl-CoA + H2O = L-2-acetamido-6-oxoheptanedioate + CoA. Its pathway is amino-acid biosynthesis; L-lysine biosynthesis via DAP pathway; LL-2,6-diaminopimelate from (S)-tetrahydrodipicolinate (acetylase route): step 1/3. Catalyzes the transfer of an acetyl group from acetyl-CoA to tetrahydrodipicolinate. This chain is 2,3,4,5-tetrahydropyridine-2,6-dicarboxylate N-acetyltransferase, found in Exiguobacterium sp. (strain ATCC BAA-1283 / AT1b).